The chain runs to 281 residues: Large ribosomal subunit protein uL2 (281 aa).

Residues 27–38 are compositionally biased toward basic and acidic residues; it reads DSPEKSLTEPLK. 2 disordered regions span residues 27 to 59 and 225 to 281; these read DSPEKSLTEPLKRSGGRNVHGHITRRHQGGGHK and AMNP…ARSQ. Positions 45 to 59 are enriched in basic residues; sequence VHGHITRRHQGGGHK.

Belongs to the universal ribosomal protein uL2 family. As to quaternary structure, part of the 50S ribosomal subunit. Forms a bridge to the 30S subunit in the 70S ribosome.

Functionally, one of the primary rRNA binding proteins. Required for association of the 30S and 50S subunits to form the 70S ribosome, for tRNA binding and peptide bond formation. It has been suggested to have peptidyltransferase activity; this is somewhat controversial. Makes several contacts with the 16S rRNA in the 70S ribosome. This is Large ribosomal subunit protein uL2 from Myxococcus xanthus (strain DK1622).